We begin with the raw amino-acid sequence, 266 residues long: RNA polymerase II subunit A C-terminal domain phosphatase ssu-72 (266 aa).

Residues 1–31 are disordered; that stretch reads MSAVDTPTGAASSSKPDQNEQNGQNGGREDS. A compositionally biased stretch (polar residues) spans 9–23; sequence GAASSSKPDQNEQNG.

It belongs to the SSU72 phosphatase family. Component of the cleavage and polyadenylation factor (CPF) complex.

It is found in the nucleus. The enzyme catalyses O-phospho-L-seryl-[protein] + H2O = L-seryl-[protein] + phosphate. It catalyses the reaction O-phospho-L-threonyl-[protein] + H2O = L-threonyl-[protein] + phosphate. Its function is as follows. Processively dephosphorylates Ser-5 of the heptad repeats YSPTSPS in the C-terminal domain of the largest RNA polymerase II subunit (rpb-1). In terms of biological role, component of the cleavage and polyadenylation factor (CPF) complex, which plays a key role in polyadenylation-dependent pre-mRNA 3'-end formation and cooperates with cleavage factors including the CFIA complex and NAB4/CFIB. Ssu-72 is required for 3'-end formation of snoRNAs. In Neurospora crassa (strain ATCC 24698 / 74-OR23-1A / CBS 708.71 / DSM 1257 / FGSC 987), this protein is RNA polymerase II subunit A C-terminal domain phosphatase ssu-72 (ssu-72).